Reading from the N-terminus, the 430-residue chain is MEF2-activating motif and SAP domain-containing transcriptional regulator (430 aa).

The MEF2-binding signature appears at Ile12–Arg28. Disordered stretches follow at residues Cys84–His172, Lys204–Pro239, Val280–Ser301, and Glu330–Asp416. Residues Leu87–Pro103 are compositionally biased toward basic and acidic residues. Pro residues predominate over residues Gln147–Leu170. An SAP domain is found at Leu181–Ala215. Residues Leu207–Ser228 show a composition bias toward basic and acidic residues. Positions Arg224–Trp430 are transcription activation. Low complexity-rich tracts occupy residues Ser363–Pro373 and Ala393–Gly403.

Interacts with MEF2C.

Its subcellular location is the nucleus. Its function is as follows. Transcriptional coactivator. Stimulates the transcriptional activity of MEF2C. Stimulates MYOD1 activity in part via MEF2, resulting in an enhancement of skeletal muscle differentiation. This chain is MEF2-activating motif and SAP domain-containing transcriptional regulator (MAMSTR), found in Bos taurus (Bovine).